Reading from the N-terminus, the 212-residue chain is Ropporin-1 (212 aa).

An RIIa domain is found at 12–43; sequence PELPELLKQFTKAAIRSQPQDLIQWAAEYFGA. Phosphoserine is present on Ser-56. The interaction with RHPN1 stretch occupies residues 209 to 212; the sequence is VRLE.

Belongs to the ropporin family. In terms of assembly, homodimer. Interacts with AKAP3. May interact with SPA17. Interacts with RHPN1. Interacts with FSCB; the interaction increases upon spermatozoa capacitation conditions. Interacts with CFAP61. Post-translationally, sumoylated, sumoylation decreases upon spermatozoa capacitation conditions.

The protein localises to the cell projection. The protein resides in the cilium. It is found in the flagellum. Its function is as follows. Important for male fertility. With ROPN1L, involved in fibrous sheath integrity and sperm motility, plays a role in PKA-dependent signaling processes required for spermatozoa capacitation. The polypeptide is Ropporin-1 (ROPN1) (Bos taurus (Bovine)).